The sequence spans 146 residues: Hemoglobin subunit beta (146 aa).

N-acetylvaline is present on V1. The Globin domain maps to 2–146; sequence HLTPEEKTAV…VANALAHKYH (145 aa). A Phosphothreonine modification is found at T12. Position 44 is a phosphoserine (S44). The residue at position 59 (K59) is an N6-acetyllysine. A heme b-binding site is contributed by H63. K82 is subject to N6-acetyllysine. Residue H92 coordinates heme b. The residue at position 93 (C93) is an S-nitrosocysteine. N6-acetyllysine is present on K144.

It belongs to the globin family. Heterotetramer of two alpha chains and two beta chains. Red blood cells.

Functionally, involved in oxygen transport from the lung to the various peripheral tissues. The chain is Hemoglobin subunit beta (HBB) from Mandrillus sphinx (Mandrill).